Consider the following 252-residue polypeptide: 2-succinyl-6-hydroxy-2,4-cyclohexadiene-1-carboxylate synthase (252 aa).

Belongs to the AB hydrolase superfamily. MenH family. As to quaternary structure, monomer.

It catalyses the reaction 5-enolpyruvoyl-6-hydroxy-2-succinyl-cyclohex-3-ene-1-carboxylate = (1R,6R)-6-hydroxy-2-succinyl-cyclohexa-2,4-diene-1-carboxylate + pyruvate. Its pathway is quinol/quinone metabolism; 1,4-dihydroxy-2-naphthoate biosynthesis; 1,4-dihydroxy-2-naphthoate from chorismate: step 3/7. It functions in the pathway quinol/quinone metabolism; menaquinone biosynthesis. In terms of biological role, catalyzes a proton abstraction reaction that results in 2,5-elimination of pyruvate from 2-succinyl-5-enolpyruvyl-6-hydroxy-3-cyclohexene-1-carboxylate (SEPHCHC) and the formation of 2-succinyl-6-hydroxy-2,4-cyclohexadiene-1-carboxylate (SHCHC). The protein is 2-succinyl-6-hydroxy-2,4-cyclohexadiene-1-carboxylate synthase of Escherichia coli (strain SMS-3-5 / SECEC).